Reading from the N-terminus, the 199-residue chain is Thymidylate kinase (199 aa).

7 to 14 (GTEGVGKT) is an ATP binding site.

The protein belongs to the thymidylate kinase family.

It catalyses the reaction dTMP + ATP = dTDP + ADP. Its function is as follows. Phosphorylation of dTMP to form dTDP in both de novo and salvage pathways of dTTP synthesis. The polypeptide is Thymidylate kinase (Acinetobacter baumannii (strain ATCC 17978 / DSM 105126 / CIP 53.77 / LMG 1025 / NCDC KC755 / 5377)).